A 512-amino-acid polypeptide reads, in one-letter code: Glycerol-3-phosphate dehydrogenase (512 aa).

16-44 (DVAVVGGGINGVGIAADAAGRGLSVFLCE) is a binding site for FAD.

Belongs to the FAD-dependent glycerol-3-phosphate dehydrogenase family. Requires FAD as cofactor.

Its subcellular location is the cytoplasm. The enzyme catalyses a quinone + sn-glycerol 3-phosphate = dihydroxyacetone phosphate + a quinol. The polypeptide is Glycerol-3-phosphate dehydrogenase (glpD) (Pseudomonas aeruginosa (strain ATCC 15692 / DSM 22644 / CIP 104116 / JCM 14847 / LMG 12228 / 1C / PRS 101 / PAO1)).